The chain runs to 94 residues: Co-chaperonin GroES (94 aa).

It belongs to the GroES chaperonin family. In terms of assembly, heptamer of 7 subunits arranged in a ring. Interacts with the chaperonin GroEL.

It is found in the cytoplasm. Together with the chaperonin GroEL, plays an essential role in assisting protein folding. The GroEL-GroES system forms a nano-cage that allows encapsulation of the non-native substrate proteins and provides a physical environment optimized to promote and accelerate protein folding. GroES binds to the apical surface of the GroEL ring, thereby capping the opening of the GroEL channel. This Alkaliphilus oremlandii (strain OhILAs) (Clostridium oremlandii (strain OhILAs)) protein is Co-chaperonin GroES.